A 156-amino-acid polypeptide reads, in one-letter code: Small ribosomal subunit protein uS7 (156 aa).

The protein belongs to the universal ribosomal protein uS7 family. Part of the 30S ribosomal subunit. Contacts proteins S9 and S11.

In terms of biological role, one of the primary rRNA binding proteins, it binds directly to 16S rRNA where it nucleates assembly of the head domain of the 30S subunit. Is located at the subunit interface close to the decoding center, probably blocks exit of the E-site tRNA. This Acaryochloris marina (strain MBIC 11017) protein is Small ribosomal subunit protein uS7.